The sequence spans 379 residues: MISREELLSKLSQVLPQPLYKEVEEAVRDLDDEKALRLVYRVLKLYVTSLIDPGEAIGIVTAQSIGEPGTQMILRSFHYAGLREFSMARGLPRLIEVVDARRTPSTPLMYVYLKPPYNKSREAAESVAKKIQQVTLETLAKEVDVDYVAGTVTITLDQEQLKYRGLTLKDVEKIVAKAKGKDVAISMRGYTITASLTTPDILKIRKIKDKILQIKISGIKGVRKVVLQYDSKNDEWYIVTEGTNLEAVLQLEEVDPTRTYSNDLHEVEEVLGIEATRALVAQEIKRVLEEQGLDVDIRHMYLVADAMTWSGRLRPIGRHGVVGSKESPLARAAFEVTVKTLIEASVRGEDELFKGVVESIIAGKYVPIGTGIVRLLMQF.

The protein belongs to the RNA polymerase beta' chain family. Part of the RNA polymerase complex.

Its subcellular location is the cytoplasm. The enzyme catalyses RNA(n) + a ribonucleoside 5'-triphosphate = RNA(n+1) + diphosphate. Functionally, DNA-dependent RNA polymerase (RNAP) catalyzes the transcription of DNA into RNA using the four ribonucleoside triphosphates as substrates. Forms part of the jaw domain. This Pyrobaculum aerophilum (strain ATCC 51768 / DSM 7523 / JCM 9630 / CIP 104966 / NBRC 100827 / IM2) protein is DNA-directed RNA polymerase subunit Rpo1C.